The following is a 483-amino-acid chain: GTPase Der (483 aa).

EngA-type G domains lie at 3–167 (FTLA…GEER) and 212–387 (LRIA…EIWN). Residues 9–16 (GRPNVGKS), 56–60 (DTAGL), 119–122 (NKAE), 218–225 (GRPNAGKS), 265–269 (DTAGM), and 330–333 (NKWD) each bind GTP. The KH-like domain maps to 388–472 (RRISTGRLNR…PIRLSLRTSD (85 aa)).

It belongs to the TRAFAC class TrmE-Era-EngA-EngB-Septin-like GTPase superfamily. EngA (Der) GTPase family. In terms of assembly, associates with the 50S ribosomal subunit.

Its function is as follows. GTPase that plays an essential role in the late steps of ribosome biogenesis. The chain is GTPase Der from Brucella suis (strain ATCC 23445 / NCTC 10510).